We begin with the raw amino-acid sequence, 1955 residues long: Rootletin (1955 aa).

5 coiled-coil regions span residues 29–58, 162–223, 284–1303, 1368–1579, and 1607–1863; these read EENRRNRQVIQDINDQLQRFRQRANAESIE, EENL…QQHT, LMRK…AVES, VGVT…EELR, and RRWE…RTKG. Disordered regions lie at residues 321–341, 391–451, 504–551, 907–935, and 961–998; these read VTENYMKSEEKANERQRDLKR, LTTK…KKLD, LKER…RSLK, EKLNEQNDGDRAEWSNERNRLESSKNEAV, and RDLEDSHEKSRDLDDKLRKMELTDEEKEEDRKKEQKTL. 2 stretches are compositionally biased toward basic and acidic residues: residues 326-341 and 396-451; these read MKSEEKANERQRDLKR and GEID…KKLD. 3 stretches are compositionally biased toward basic and acidic residues: residues 907 to 931, 961 to 982, and 989 to 998; these read EKLNEQNDGDRAEWSNERNRLESSK, RDLEDSHEKSRDLDDKLRKMEL, and EDRKKEQKTL.

It belongs to the rootletin family. Expressed in head ciliated neurons.

It is found in the cytoplasm. The protein resides in the cytoskeleton. It localises to the cilium basal body. The protein localises to the cilium axoneme. In terms of biological role, major structural component of the ciliary rootlet, a cytoskeletal-like structure in ciliated cells which originates from the basal body at the proximal end of a cilium and extends proximally toward the cell nucleus. Required for cilia integrity and function in sensory neurons. Maintains cilia integrity, partly by modulating the assembly and transport of intraflagellar proteins along the ciliary axoneme. Required for normal mating behavior and normal responses to environmental and chemical stimuli. The chain is Rootletin from Caenorhabditis elegans.